The sequence spans 101 residues: Small ribosomal subunit protein uS14 (101 aa).

It belongs to the universal ribosomal protein uS14 family. As to quaternary structure, part of the 30S ribosomal subunit. Contacts proteins S3 and S10.

In terms of biological role, binds 16S rRNA, required for the assembly of 30S particles and may also be responsible for determining the conformation of the 16S rRNA at the A site. The protein is Small ribosomal subunit protein uS14 of Methylorubrum extorquens (strain PA1) (Methylobacterium extorquens).